A 141-amino-acid chain; its full sequence is Large ribosomal subunit protein uL11 (141 aa).

This sequence belongs to the universal ribosomal protein uL11 family. Part of the ribosomal stalk of the 50S ribosomal subunit. Interacts with L10 and the large rRNA to form the base of the stalk. L10 forms an elongated spine to which L12 dimers bind in a sequential fashion forming a multimeric L10(L12)X complex. In terms of processing, one or more lysine residues are methylated.

Functionally, forms part of the ribosomal stalk which helps the ribosome interact with GTP-bound translation factors. The sequence is that of Large ribosomal subunit protein uL11 from Ruminiclostridium cellulolyticum (strain ATCC 35319 / DSM 5812 / JCM 6584 / H10) (Clostridium cellulolyticum).